A 394-amino-acid polypeptide reads, in one-letter code: 8-amino-7-oxononanoate synthase (394 aa).

R21 is a binding site for substrate. G112–Y113 is a pyridoxal 5'-phosphate binding site. H137 contacts substrate. Pyridoxal 5'-phosphate-binding residues include S183, H211, and T239. N6-(pyridoxal phosphate)lysine is present on K242. Substrate is bound at residue T358.

Belongs to the class-II pyridoxal-phosphate-dependent aminotransferase family. BioF subfamily. Homodimer. Pyridoxal 5'-phosphate serves as cofactor.

It carries out the reaction 6-carboxyhexanoyl-[ACP] + L-alanine + H(+) = (8S)-8-amino-7-oxononanoate + holo-[ACP] + CO2. It participates in cofactor biosynthesis; biotin biosynthesis. In terms of biological role, catalyzes the decarboxylative condensation of pimeloyl-[acyl-carrier protein] and L-alanine to produce 8-amino-7-oxononanoate (AON), [acyl-carrier protein], and carbon dioxide. This chain is 8-amino-7-oxononanoate synthase, found in Burkholderia cenocepacia (strain ATCC BAA-245 / DSM 16553 / LMG 16656 / NCTC 13227 / J2315 / CF5610) (Burkholderia cepacia (strain J2315)).